The following is a 208-amino-acid chain: Urease accessory protein UreG 2 (208 aa).

A GTP-binding site is contributed by 16–23 (GPVGSGKT).

The protein belongs to the SIMIBI class G3E GTPase family. UreG subfamily. As to quaternary structure, homodimer. UreD, UreF and UreG form a complex that acts as a GTP-hydrolysis-dependent molecular chaperone, activating the urease apoprotein by helping to assemble the nickel containing metallocenter of UreC. The UreE protein probably delivers the nickel.

Its subcellular location is the cytoplasm. Facilitates the functional incorporation of the urease nickel metallocenter. This process requires GTP hydrolysis, probably effectuated by UreG. The chain is Urease accessory protein UreG 2 from Methylobacterium radiotolerans (strain ATCC 27329 / DSM 1819 / JCM 2831 / NBRC 15690 / NCIMB 10815 / 0-1).